Consider the following 249-residue polypeptide: tRNA (guanine-N(1)-)-methyltransferase (249 aa).

S-adenosyl-L-methionine-binding positions include G112 and 132-137 (LGDFVL).

It belongs to the RNA methyltransferase TrmD family. As to quaternary structure, homodimer.

It is found in the cytoplasm. The catalysed reaction is guanosine(37) in tRNA + S-adenosyl-L-methionine = N(1)-methylguanosine(37) in tRNA + S-adenosyl-L-homocysteine + H(+). In terms of biological role, specifically methylates guanosine-37 in various tRNAs. This is tRNA (guanine-N(1)-)-methyltransferase from Geobacter sp. (strain M21).